Reading from the N-terminus, the 317-residue chain is MAAPMELFCWSGGWGLPSVDLDSLAVLTYTRFTGAPLKIHKTSNPWQSPSGTLPALRTSDGKVITVPDKIITHLRKEKYNADYDLSARQGADTLAFMSLLEEKLLPVLIHTFWIDAKNYVEVTRKWYAEAMPFPLNFFLPGRMQRQYMERLQLLCGEHKSENEEELEKELYQEARECLTLLSQRLGSQKFFFGDAPASLDAFVFSHLALLLQAKLPSGKLQAHLRGLHNLCAYCTHILNLYFPRDGDEVPLPRQTPAAPETEEEPYRRRTQILSVLAGLAAMVGYALLSGIVSIQRTSPARAPGTRALGLAEEDEED.

Glycyl lysine isopeptide (Lys-Gly) (interchain with G-Cter in ubiquitin) cross-links involve residues lysine 38, lysine 41, lysine 78, and lysine 168. A helical membrane pass occupies residues 272 to 292; the sequence is ILSVLAGLAAMVGYALLSGIV.

This sequence belongs to the metaxin family. Interacts with MTX2/metaxin-2. Associates with the mitochondrial contact site and cristae organizing system (MICOS) complex, composed of at least MICOS10/MIC10, CHCHD3/MIC19, CHCHD6/MIC25, APOOL/MIC27, IMMT/MIC60, APOO/MIC23/MIC26 and QIL1/MIC13. This complex was also known under the names MINOS or MitOS complex. The MICOS complex associates with mitochondrial outer membrane proteins SAMM50, MTX1 and MTX2 (together described as components of the mitochondrial outer membrane sorting assembly machinery (SAM) complex) and DNAJC11, mitochondrial inner membrane protein TMEM11 and with HSPA9. The MICOS and SAM complexes together with DNAJC11 are part of a large protein complex spanning both membranes termed the mitochondrial intermembrane space bridging (MIB) complex. Interacts with ARMC1. Post-translationally, ubiquitinated by PRKN during mitophagy, leading to its degradation and enhancement of mitophagy. Deubiquitinated by USP30. In terms of tissue distribution, ubiquitous. Higher levels are seen in the kidney as compared to other tissues.

Its subcellular location is the mitochondrion outer membrane. Involved in transport of proteins into the mitochondrion. Essential for embryonic development. The sequence is that of Metaxin-1 (Mtx1) from Mus musculus (Mouse).